A 278-amino-acid polypeptide reads, in one-letter code: 4-deoxy-L-threo-5-hexosulose-uronate ketol-isomerase (278 aa).

Residues His-196, His-198, Glu-203, and His-245 each contribute to the Zn(2+) site.

It belongs to the KduI family. As to quaternary structure, homohexamer. Zn(2+) is required as a cofactor.

The enzyme catalyses 5-dehydro-4-deoxy-D-glucuronate = 3-deoxy-D-glycero-2,5-hexodiulosonate. It participates in glycan metabolism; pectin degradation; 2-dehydro-3-deoxy-D-gluconate from pectin: step 4/5. Its function is as follows. Catalyzes the isomerization of 5-dehydro-4-deoxy-D-glucuronate to 3-deoxy-D-glycero-2,5-hexodiulosonate. The protein is 4-deoxy-L-threo-5-hexosulose-uronate ketol-isomerase of Escherichia coli (strain SMS-3-5 / SECEC).